Reading from the N-terminus, the 581-residue chain is Glutamyl-tRNA reductase (581 aa).

Substrate-binding positions include 49–52 (TCNR), serine 109, 114–116 (EGQ), and glutamine 120. Cysteine 50 acts as the Nucleophile in catalysis. Residue 192 to 197 (GAGSMS) coordinates NADP(+). Positions 292 to 416 (PAVEDTAVQE…AEAPRPQPVL (125 aa)) are insert.

Belongs to the glutamyl-tRNA reductase family. Homodimer.

It catalyses the reaction (S)-4-amino-5-oxopentanoate + tRNA(Glu) + NADP(+) = L-glutamyl-tRNA(Glu) + NADPH + H(+). It functions in the pathway porphyrin-containing compound metabolism; protoporphyrin-IX biosynthesis; 5-aminolevulinate from L-glutamyl-tRNA(Glu): step 1/2. In terms of biological role, catalyzes the NADPH-dependent reduction of glutamyl-tRNA(Glu) to glutamate 1-semialdehyde (GSA). This chain is Glutamyl-tRNA reductase, found in Streptomyces coelicolor (strain ATCC BAA-471 / A3(2) / M145).